The sequence spans 137 residues: Profilin-3 (137 aa).

Belongs to the profilin family. As to quaternary structure, interacts with ACTRT3.

It is found in the cytoplasm. The protein localises to the cytoskeleton. It localises to the nucleus. In terms of biological role, binds to actin and affects the structure of the cytoskeleton. Binds to poly-L-proline, phosphatidylinositol 3-phosphate (PtdIns(3)P), phosphatidylinositol 4,5-bisphosphate (PtdIns(4,5)P2) and phosphatidylinositol 4-phosphate (PtdIns(4)P). Slightly reduces actin polymerization. May be involved in spermatogenesis. The sequence is that of Profilin-3 (PFN3) from Bos taurus (Bovine).